The primary structure comprises 271 residues: Putative pyruvate, phosphate dikinase regulatory protein (271 aa).

147-154 serves as a coordination point for ADP; that stretch reads GLSRTSKT.

Belongs to the pyruvate, phosphate/water dikinase regulatory protein family. PDRP subfamily.

It catalyses the reaction N(tele)-phospho-L-histidyl/L-threonyl-[pyruvate, phosphate dikinase] + ADP = N(tele)-phospho-L-histidyl/O-phospho-L-threonyl-[pyruvate, phosphate dikinase] + AMP + H(+). The enzyme catalyses N(tele)-phospho-L-histidyl/O-phospho-L-threonyl-[pyruvate, phosphate dikinase] + phosphate + H(+) = N(tele)-phospho-L-histidyl/L-threonyl-[pyruvate, phosphate dikinase] + diphosphate. In terms of biological role, bifunctional serine/threonine kinase and phosphorylase involved in the regulation of the pyruvate, phosphate dikinase (PPDK) by catalyzing its phosphorylation/dephosphorylation. This Clostridium tetani (strain Massachusetts / E88) protein is Putative pyruvate, phosphate dikinase regulatory protein.